The sequence spans 302 residues: Capsid protein (302 aa).

Residues 217–302 (FHSGDAAKQS…HSSPQQTPKK (86 aa)) are disordered. Residues 254 to 271 (PRAGTPSSQKSGQSGQTT) show a composition bias toward low complexity. Over residues 288 to 302 (HKSTPHSSPQQTPKK) the composition is skewed to polar residues.

It is found in the virion. In terms of biological role, capsid protein self-assembles to form a flexuous, filamentous capsid (Potential). The capsid encapsulates the single-stranded RNA genome. This Botryotinia fuckeliana (Noble rot fungus) protein is Capsid protein.